We begin with the raw amino-acid sequence, 183 residues long: Putative 3-methyladenine DNA glycosylase (183 aa).

This sequence belongs to the DNA glycosylase MPG family.

This is Putative 3-methyladenine DNA glycosylase from Legionella pneumophila (strain Lens).